The chain runs to 600 residues: Putative heme-binding protein NP_2262A (600 aa).

His-180 serves as a coordination point for heme. The interval 261-289 is disordered; sequence TSETGHGGADSQTSSESSGGRPSTDPSHD. The segment covering 270 to 285 has biased composition (polar residues); the sequence is DSQTSSESSGGRPSTD. Positions 510-598 constitute an ABM domain; it reads GTMGMFYTVK…VLADRPRHVF (89 aa).

This sequence in the N-terminal section; belongs to the ChdC family.

This chain is Putative heme-binding protein NP_2262A, found in Natronomonas pharaonis (strain ATCC 35678 / DSM 2160 / CIP 103997 / JCM 8858 / NBRC 14720 / NCIMB 2260 / Gabara) (Halobacterium pharaonis).